The primary structure comprises 259 residues: Phosphatidylglycerol--prolipoprotein diacylglyceryl transferase (259 aa).

4 helical membrane passes run 9–29, 47–67, 83–103, and 109–129; these read IGPF…VLAV, IDFI…YYVI, IWNG…VLFI, and VLNP…AQAI. Arg-131 is a binding site for a 1,2-diacyl-sn-glycero-3-phospho-(1'-sn-glycerol). Helical transmembrane passes span 167-187, 194-214, and 227-247; these read MPTF…ICYL, LLEG…RFVI, and LRVS…FVIL.

It belongs to the Lgt family.

Its subcellular location is the cell membrane. It catalyses the reaction L-cysteinyl-[prolipoprotein] + a 1,2-diacyl-sn-glycero-3-phospho-(1'-sn-glycerol) = an S-1,2-diacyl-sn-glyceryl-L-cysteinyl-[prolipoprotein] + sn-glycerol 1-phosphate + H(+). The protein operates within protein modification; lipoprotein biosynthesis (diacylglyceryl transfer). In terms of biological role, catalyzes the transfer of the diacylglyceryl group from phosphatidylglycerol to the sulfhydryl group of the N-terminal cysteine of a prolipoprotein, the first step in the formation of mature lipoproteins. This Streptococcus uberis (strain ATCC BAA-854 / 0140J) protein is Phosphatidylglycerol--prolipoprotein diacylglyceryl transferase.